A 490-amino-acid polypeptide reads, in one-letter code: uncharacterized protein (490 aa).

The span at 370-385 (FSMKRPSSSSSSLSGS) shows a compositional bias: low complexity. Residues 370 to 406 (FSMKRPSSSSSSLSGSWHGDTENSVKQSLASPSEASL) are disordered. Residues 391–406 (ENSVKQSLASPSEASL) show a composition bias toward polar residues.

The protein localises to the cytoplasm. The protein resides in the nucleus. This is an uncharacterized protein from Schizosaccharomyces pombe (strain 972 / ATCC 24843) (Fission yeast).